The following is a 150-amino-acid chain: uncharacterized protein (150 aa).

A helical transmembrane segment spans residues 19–39 (SLGMCVILIDGLIVLTAAFVF).

To B.subtilis YpjC, YqfU and YitT.

Its subcellular location is the cell membrane. This is an uncharacterized protein from Bacillus sp. (strain PS3).